The primary structure comprises 465 residues: Cysteine--tRNA ligase (465 aa).

Cysteine 27 lines the Zn(2+) pocket. Residues 29–39 carry the 'HIGH' region motif; that stretch reads PTVYNFFHIGN. Positions 207, 232, and 236 each coordinate Zn(2+). Positions 264–268 match the 'KMSKS' region motif; sequence KMSKS. Lysine 267 is a binding site for ATP.

It belongs to the class-I aminoacyl-tRNA synthetase family. As to quaternary structure, monomer. Requires Zn(2+) as cofactor.

Its subcellular location is the cytoplasm. The catalysed reaction is tRNA(Cys) + L-cysteine + ATP = L-cysteinyl-tRNA(Cys) + AMP + diphosphate. The protein is Cysteine--tRNA ligase of Clostridium botulinum (strain Loch Maree / Type A3).